Here is a 559-residue protein sequence, read N- to C-terminus: O-fucosyltransferase 37 (559 aa).

Residues 53 to 73 traverse the membrane as a helical; Signal-anchor for type II membrane protein segment; the sequence is FFLLLISLSLVFSGISFLTFS. N-linked (GlcNAc...) asparagine glycosylation occurs at Asn126. 331 to 333 is a substrate binding site; sequence HLR. Residues Asn372, Asn403, Asn447, and Asn504 are each glycosylated (N-linked (GlcNAc...) asparagine).

This sequence belongs to the glycosyltransferase GT106 family.

It is found in the membrane. Its pathway is glycan metabolism. The polypeptide is O-fucosyltransferase 37 (Arabidopsis thaliana (Mouse-ear cress)).